The following is an 83-amino-acid chain: Small ribosomal subunit protein eS21 (83 aa).

N-acetylmethionine is present on Met-1. Residue Lys-41 forms a Glycyl lysine isopeptide (Lys-Gly) (interchain with G-Cter in SUMO2) linkage.

The protein belongs to the eukaryotic ribosomal protein eS21 family. As to quaternary structure, component of the 40S small ribosomal subunit.

Its subcellular location is the cytoplasm. It localises to the cytosol. It is found in the rough endoplasmic reticulum. In terms of biological role, component of the small ribosomal subunit. The ribosome is a large ribonucleoprotein complex responsible for the synthesis of proteins in the cell. The polypeptide is Small ribosomal subunit protein eS21 (RPS21) (Oryctolagus cuniculus (Rabbit)).